Here is a 209-residue protein sequence, read N- to C-terminus: GTP cyclohydrolase-2 (209 aa).

GTP is bound at residue 49–53 (RIHSE). Residues Cys-54, Cys-65, and Cys-67 each coordinate Zn(2+). Residues Gln-70, 92–94 (EGR), and Thr-114 each bind GTP. Residue Asp-126 is the Proton acceptor of the active site. The Nucleophile role is filled by Arg-128. Positions 149 and 154 each coordinate GTP.

Belongs to the GTP cyclohydrolase II family. Zn(2+) serves as cofactor.

The catalysed reaction is GTP + 4 H2O = 2,5-diamino-6-hydroxy-4-(5-phosphoribosylamino)-pyrimidine + formate + 2 phosphate + 3 H(+). The protein operates within cofactor biosynthesis; riboflavin biosynthesis; 5-amino-6-(D-ribitylamino)uracil from GTP: step 1/4. Its function is as follows. Catalyzes the conversion of GTP to 2,5-diamino-6-ribosylamino-4(3H)-pyrimidinone 5'-phosphate (DARP), formate and pyrophosphate. The polypeptide is GTP cyclohydrolase-2 (Shewanella pealeana (strain ATCC 700345 / ANG-SQ1)).